Here is a 141-residue protein sequence, read N- to C-terminus: Prefoldin subunit alpha (141 aa).

This sequence belongs to the prefoldin subunit alpha family. Heterohexamer of two alpha and four beta subunits.

The protein resides in the cytoplasm. Molecular chaperone capable of stabilizing a range of proteins. Seems to fulfill an ATP-independent, HSP70-like function in archaeal de novo protein folding. The chain is Prefoldin subunit alpha (pfdA) from Methanothermobacter thermautotrophicus (strain ATCC 29096 / DSM 1053 / JCM 10044 / NBRC 100330 / Delta H) (Methanobacterium thermoautotrophicum).